A 363-amino-acid chain; its full sequence is NADH-quinone oxidoreductase subunit H (363 aa).

10 consecutive transmembrane segments (helical) span residues Val29–Trp49, Gly62–Phe82, Phe96–Phe116, Val127–Gly147, Ala163–Ala183, Phe202–Val222, Glu238–Leu257, Ile264–Val286, Lys299–Phe319, and Phe339–Ile359.

The protein belongs to the complex I subunit 1 family. NDH-1 is composed of 14 different subunits. Subunits NuoA, H, J, K, L, M, N constitute the membrane sector of the complex.

The protein resides in the cell inner membrane. It catalyses the reaction a quinone + NADH + 5 H(+)(in) = a quinol + NAD(+) + 4 H(+)(out). Its function is as follows. NDH-1 shuttles electrons from NADH, via FMN and iron-sulfur (Fe-S) centers, to quinones in the respiratory chain. The immediate electron acceptor for the enzyme in this species is believed to be ubiquinone. Couples the redox reaction to proton translocation (for every two electrons transferred, four hydrogen ions are translocated across the cytoplasmic membrane), and thus conserves the redox energy in a proton gradient. This subunit may bind ubiquinone. The sequence is that of NADH-quinone oxidoreductase subunit H from Xanthomonas oryzae pv. oryzae (strain PXO99A).